Consider the following 651-residue polypeptide: Acetyl-coenzyme A synthetase (651 aa).

CoA contacts are provided by residues 191–194 (RGGK), threonine 311, and asparagine 335. Residues 387–389 (GEP), 411–416 (DTWWQT), aspartate 500, and arginine 515 each bind ATP. Serine 523 contributes to the CoA binding site. Arginine 526 contacts ATP. 3 residues coordinate Mg(2+): valine 537, histidine 539, and valine 542. Arginine 584 contributes to the CoA binding site. Lysine 609 carries the N6-acetyllysine modification.

Belongs to the ATP-dependent AMP-binding enzyme family. It depends on Mg(2+) as a cofactor. Acetylated. Deacetylation by the SIR2-homolog deacetylase activates the enzyme.

The enzyme catalyses acetate + ATP + CoA = acetyl-CoA + AMP + diphosphate. In terms of biological role, catalyzes the conversion of acetate into acetyl-CoA (AcCoA), an essential intermediate at the junction of anabolic and catabolic pathways. AcsA undergoes a two-step reaction. In the first half reaction, AcsA combines acetate with ATP to form acetyl-adenylate (AcAMP) intermediate. In the second half reaction, it can then transfer the acetyl group from AcAMP to the sulfhydryl group of CoA, forming the product AcCoA. This chain is Acetyl-coenzyme A synthetase, found in Stutzerimonas stutzeri (strain A1501) (Pseudomonas stutzeri).